We begin with the raw amino-acid sequence, 118 residues long: uncharacterized protein (118 aa).

Residues 25–85 are disordered; that stretch reads AEQPGSGGIA…SSSSTPSRAR (61 aa). The segment covering 71–83 has biased composition (low complexity); that stretch reads RPSASSSSSTPSR.

This is an uncharacterized protein from Azospirillum brasilense.